The following is a 736-amino-acid chain: 1,4-alpha-glucan branching enzyme GlgB (736 aa).

The active-site Nucleophile is D415. The Proton donor role is filled by E468.

This sequence belongs to the glycosyl hydrolase 13 family. GlgB subfamily. In terms of assembly, monomer.

The enzyme catalyses Transfers a segment of a (1-&gt;4)-alpha-D-glucan chain to a primary hydroxy group in a similar glucan chain.. Its pathway is glycan biosynthesis; glycogen biosynthesis. Catalyzes the formation of the alpha-1,6-glucosidic linkages in glycogen by scission of a 1,4-alpha-linked oligosaccharide from growing alpha-1,4-glucan chains and the subsequent attachment of the oligosaccharide to the alpha-1,6 position. The polypeptide is 1,4-alpha-glucan branching enzyme GlgB (Rhodopirellula baltica (strain DSM 10527 / NCIMB 13988 / SH1)).